Consider the following 281-residue polypeptide: Transformer-2 protein homolog alpha (281 aa).

Residues 1–116 (MSDVEENNFE…TGSRANPDPN (116 aa)) are disordered. The residue at position 2 (S2) is an N-acetylserine. A phosphoserine mark is found at S2 and S14. T24 is modified (phosphothreonine). The span at 51–82 (RSRSKSRSRSRRHSHRRYTRSRSHSHRRRSRS) shows a compositional bias: basic residues. Residues S80, S82, and S84 each carry the phosphoserine modification. T86 is subject to Phosphothreonine. The span at 90–108 (RRRRSRSHSPMSNRRRHTG) shows a compositional bias: basic residues. Residues S94 and S96 each carry the phosphoserine modification. Positions 117–195 (TCLGVFGLSL…RRIRVDYSIT (79 aa)) constitute an RRM domain. K196 is covalently cross-linked (Glycyl lysine isopeptide (Lys-Gly) (interchain with G-Cter in SUMO2)). A linker region spans residues 196 to 223 (KRAHTPTPGIYMGRPTHSGGGGGGGGGG). The segment at 199–281 (HTPTPGIYMG…RSRSYSPRRY (83 aa)) is disordered. 2 positions are modified to phosphothreonine: T200 and T202. Positions 213 to 231 (SGGGGGGGGGGGGGGGGGG) are enriched in gly residues. R233 carries the post-translational modification Omega-N-methylarginine. Basic and acidic residues predominate over residues 233–257 (RRRDSYYDRGYDRGYDRYEDYDYRR). Position 237 is a phosphoserine (S237). Basic residues predominate over residues 267 to 281 (YRSRSRSRSYSPRRY).

It belongs to the splicing factor SR family. In terms of assembly, binds to A3 enhancer proteins SRp75, SRp55, SRp40 and SRp30. Interacts with ILDR1 (via C-terminus) and ILDR2. Post-translationally, phosphorylated in the RS domains. As to expression, expressed in inner ear.

The protein localises to the nucleus. Sequence-specific RNA-binding protein which participates in the control of pre-mRNA splicing. In Mus musculus (Mouse), this protein is Transformer-2 protein homolog alpha.